The following is a 473-amino-acid chain: MYTYMEYLQKCLYKSTNWNEDNIYSNITATSQALLDFPIPNGFKIDSSSKTTDYSASSFTLSNHHQINGSLAYLYSSIPLTNTMGTKDVSLQDAIAGFRIIEPSVGLRSKLKNNIMSNRSSLLYGRMYFPGSALEAMIIKRLTKNSQLLIKCVNNPHLEKNGTMIVYLQNNTAKYSRELIYSTNEALIGLRCLYNLGDATSHNFTNINPAVIPKFDNSVVSIGTEIWYAARTMSPGLSAALRYSTRSTSTGKPLTMTLAINPIVGHVSSTYTVKTSVASTFCSKYDFNVFSYASNLSLGFELYSYANKKKNSFPSFEHHEIHSSSEENKYLKKHPELQRHHNLHHNLHHQRVPIKSHKYEGNRTIINPIQNLDNVYHINPTLLSSNGSTSTTTNNENTNTSETVTAAFQNLVNESDFSSVFKFSTSLNDKVVKILWEGRLKEFLVSTGVKLSLNPITNTPEFNKLGISFSYAL.

It belongs to the MDM10 family. Component of the ER-mitochondria encounter structure (ERMES) or MDM complex, composed of MMM1, MDM10, MDM12 and MDM34. Associates with the mitochondrial outer membrane sorting assembly machinery SAM(core) complex.

It localises to the mitochondrion outer membrane. Its function is as follows. Component of the ERMES/MDM complex, which serves as a molecular tether to connect the endoplasmic reticulum and mitochondria. Components of this complex are involved in the control of mitochondrial shape and protein biogenesis and may function in phospholipid exchange. MDM10 is involved in the late assembly steps of the general translocase of the mitochondrial outer membrane (TOM complex). Functions in the TOM40-specific route of the assembly of outer membrane beta-barrel proteins, including the association of TOM40 with the receptor TOM22 and small TOM proteins. Can associate with the SAM(core) complex as well as the MDM12-MMM1 complex, both involved in late steps of the major beta-barrel assembly pathway, that is responsible for biogenesis of all outer membrane beta-barrel proteins. May act as a switch that shuttles between both complexes and channels precursor proteins into the TOM40-specific pathway. Plays a role in mitochondrial morphology and in the inheritance of mitochondria. The polypeptide is Mitochondrial distribution and morphology protein 10 (Candida albicans (strain WO-1) (Yeast)).